The sequence spans 621 residues: Methionine--tRNA ligase (621 aa).

A 'HIGH' region motif is present at residues 11 to 21 (PYANGPRHIGH). The Zn(2+) site is built by Cys143, Cys146, Cys156, and Cys159. A 'KMSKS' region motif is present at residues 347 to 351 (KFSSS). Ser350 contacts ATP.

The protein belongs to the class-I aminoacyl-tRNA synthetase family. MetG type 1 subfamily. In terms of assembly, monomer. Requires Zn(2+) as cofactor.

Its subcellular location is the cytoplasm. It carries out the reaction tRNA(Met) + L-methionine + ATP = L-methionyl-tRNA(Met) + AMP + diphosphate. Its function is as follows. Is required not only for elongation of protein synthesis but also for the initiation of all mRNA translation through initiator tRNA(fMet) aminoacylation. The polypeptide is Methionine--tRNA ligase (Bifidobacterium longum (strain NCC 2705)).